We begin with the raw amino-acid sequence, 463 residues long: Methionine aminopeptidase 2-2 (463 aa).

Residues Met-1–Thr-97 are disordered. Residues Asp-27–Gly-36 are compositionally biased toward polar residues. Residues Gly-46–Glu-57 show a composition bias toward acidic residues. The span at Lys-69 to Lys-85 shows a compositional bias: basic residues. The span at Ser-86 to Thr-97 shows a compositional bias: polar residues. Position 215 (His-215) interacts with substrate. The a divalent metal cation site is built by Asp-236, Asp-247, and His-316. His-324 is a binding site for substrate. A divalent metal cation is bound by residues Glu-349 and Glu-444.

This sequence belongs to the peptidase M24A family. Methionine aminopeptidase eukaryotic type 2 subfamily. The cofactor is Co(2+). Requires Zn(2+) as cofactor. Mn(2+) serves as cofactor. It depends on Fe(2+) as a cofactor.

The protein localises to the cytoplasm. It catalyses the reaction Release of N-terminal amino acids, preferentially methionine, from peptides and arylamides.. Its function is as follows. Cotranslationally removes the N-terminal methionine from nascent proteins. The N-terminal methionine is often cleaved when the second residue in the primary sequence is small and uncharged (Met-Ala-, Cys, Gly, Pro, Ser, Thr, or Val). In Neosartorya fischeri (strain ATCC 1020 / DSM 3700 / CBS 544.65 / FGSC A1164 / JCM 1740 / NRRL 181 / WB 181) (Aspergillus fischerianus), this protein is Methionine aminopeptidase 2-2.